The primary structure comprises 163 residues: Sperm acrosome membrane-associated protein 3 (163 aa).

The N-terminal stretch at 1–35 (MEAGSWAPRRWPRPPGIVLLALASVLSSLLSSGQA) is a signal peptide. The 128-residue stretch at 36–163 (RVYSRCELAR…LSDWVDGCEL (128 aa)) folds into the C-type lysozyme domain. Intrachain disulfides connect cysteine 41/cysteine 161, cysteine 65/cysteine 149, cysteine 99/cysteine 114, and cysteine 110/cysteine 128.

This sequence belongs to the glycosyl hydrolase 22 family. In terms of assembly, interacts with ASTL.

It is found in the secreted. Its function is as follows. Sperm surface membrane protein that may be involved in sperm-egg plasma membrane adhesion and fusion during fertilization. It could be a potential receptor for the egg oligosaccharide residue N-acetylglucosamine, which is present in the extracellular matrix over the egg plasma membrane. The processed form has no detectable bacteriolytic activity in vitro. The protein is Sperm acrosome membrane-associated protein 3 (SPACA3) of Bos taurus (Bovine).